The following is a 309-amino-acid chain: MDDQGCPRCKTTKYRNPSLKLMVNVCGHTLCESCVDLLFVRGAGNCPECGTPLRKSNFRVQLFEDPTVDKEVEIRKKVLKIYNKREEDFPSLREYNDFLEEVEEIVFNLTNNVDLENTKKKMEIYQKENKDVIQKNKLKLTREQEELEEALEVERQEHEQRRLFIQKEEELQQALKRKNKQAFLDELESSDLPVALLLAQHKDRSTQLEMQLEKPRSMKPVTFSTGIKMGQQISLAPIQKLEEALYEYQPLQIETCGPQVPEQELLGRLGYLNHVRAASPQDLAGGYTSSLACHRALQDAFSGLFWQPR.

At methionine 1 the chain carries N-acetylmethionine. Residues 6–50 (CPRCKTTKYRNPSLKLMVNVCGHTLCESCVDLLFVRGAGNCPECG) form an RING-type zinc finger. Threonine 51 carries the post-translational modification Phosphothreonine. Residues 142-161 (REQEELEEALEVERQEHEQR) form the UIM domain. The residue at position 279 (serine 279) is a Phosphoserine.

Associates primarily with CDK7 and cyclin H to form the CAK complex. CAK can further associate with the core-TFIIH to form the TFIIH basal transcription factor.

The protein localises to the nucleus. Its function is as follows. Stabilizes the cyclin H-CDK7 complex to form a functional CDK-activating kinase (CAK) enzymatic complex. CAK activates the cyclin-associated kinases CDK1, CDK2, CDK4 and CDK6 by threonine phosphorylation. CAK complexed to the core-TFIIH basal transcription factor activates RNA polymerase II by serine phosphorylation of the repetitive C-terminal domain (CTD) of its large subunit (POLR2A), allowing its escape from the promoter and elongation of the transcripts. Involved in cell cycle control and in RNA transcription by RNA polymerase II. The sequence is that of CDK-activating kinase assembly factor MAT1 (Mnat1) from Mus musculus (Mouse).